The sequence spans 365 residues: Validamycin A dioxygenase (365 aa).

A Fe2OG dioxygenase domain is found at 174 to 284; sequence HATWTQSVNW…LVSLVYFFDA (111 aa). Residues His-203, Asp-205, and His-261 each contribute to the Fe cation site. Residues 331–365 form a disordered region; sequence GELSLSRPGSADSPGSSPADDHPSRPGRHPAQGPQ. The span at 336-348 shows a compositional bias: low complexity; the sequence is SRPGSADSPGSSP.

Belongs to the iron/ascorbate-dependent oxidoreductase family. Fe(2+) is required as a cofactor.

It catalyses the reaction validamycin A + 2-oxoglutarate + O2 = validamycin B + succinate + CO2 + H(+). The enzyme catalyses validoxylamine A + 2-oxoglutarate + O2 = validoxylamine B + succinate + CO2 + H(+). Its pathway is antibiotic biosynthesis. Involved in the biosynthesis of validamycin B, a component of the antifungal and antibiotic validamycin complex used as a crop protectant. Catalyzes the regioselective hydroxylation of validamycin A (4-O-beta-D-glucopyranosyl-validoxylamine A) at the C-6 position to yield validamycin B. To a lesser extent, also able to convert validoxylamine A to its hydroxylated derivative. The sequence is that of Validamycin A dioxygenase from Streptomyces hygroscopicus subsp. limoneus.